Here is a 216-residue protein sequence, read N- to C-terminus: Imidazole glycerol phosphate synthase subunit HisH (216 aa).

Residues 2–216 (SVAIVDYGSG…LISNFLKWKP (215 aa)) enclose the Glutamine amidotransferase type-1 domain. Residue Cys88 is the Nucleophile of the active site. Residues His196 and Glu198 contribute to the active site.

As to quaternary structure, heterodimer of HisH and HisF.

The protein localises to the cytoplasm. It carries out the reaction 5-[(5-phospho-1-deoxy-D-ribulos-1-ylimino)methylamino]-1-(5-phospho-beta-D-ribosyl)imidazole-4-carboxamide + L-glutamine = D-erythro-1-(imidazol-4-yl)glycerol 3-phosphate + 5-amino-1-(5-phospho-beta-D-ribosyl)imidazole-4-carboxamide + L-glutamate + H(+). It catalyses the reaction L-glutamine + H2O = L-glutamate + NH4(+). It functions in the pathway amino-acid biosynthesis; L-histidine biosynthesis; L-histidine from 5-phospho-alpha-D-ribose 1-diphosphate: step 5/9. IGPS catalyzes the conversion of PRFAR and glutamine to IGP, AICAR and glutamate. The HisH subunit catalyzes the hydrolysis of glutamine to glutamate and ammonia as part of the synthesis of IGP and AICAR. The resulting ammonia molecule is channeled to the active site of HisF. This Rhodopseudomonas palustris (strain ATCC BAA-98 / CGA009) protein is Imidazole glycerol phosphate synthase subunit HisH.